A 178-amino-acid chain; its full sequence is Caveolin-1 (178 aa).

Residue S2 is modified to N-acetylserine. S2 carries the phosphoserine modification. Residues 2 to 94 (SGGKYVDSEG…WKASFTTFTV (93 aa)) form a required for homooligomerization region. At 2–104 (SGGKYVDSEG…TKYWFYRLLS (103 aa)) the chain is on the cytoplasmic side. An N6-acetyllysine; alternate modification is found at K5. A Glycyl lysine isopeptide (Lys-Gly) (interchain with G-Cter in ubiquitin); alternate cross-link involves residue K5. Phosphotyrosine is present on Y6. S9 carries the post-translational modification Phosphoserine. A Phosphotyrosine; by ABL1 modification is found at Y14. Y25 carries the post-translational modification Phosphotyrosine. Glycyl lysine isopeptide (Lys-Gly) (interchain with G-Cter in ubiquitin) cross-links involve residues K26, K30, K39, K47, and K57. An interaction with CAVIN3 region spans residues 82–94 (DGIWKASFTTFTV). Positions 105–125 (ALFGIPMALIWGIYFAILSFL) form an intramembrane region, helical. Over 126 to 178 (HIWAVVPCIKSFLIEIQCISRVYSIYVHTFCDPFFEAVGKIFSNIRINMQKEI) the chain is Cytoplasmic. The tract at residues 131 to 142 (VPCIKSFLIEIQ) is interacts with SPRY1, SPRY2, SPRY3 and SPRY4. S-palmitoyl cysteine attachment occurs at residues C133, C143, and C156. Positions 149 to 160 (SIYVHTFCDPFF) are interacts with SPRY1, SPRY2, and SPRY4. Residues 167 to 178 (FSNIRINMQKEI) form an interacts with SPRY1, SPRY2, SPRY3 and SPRY4 region.

This sequence belongs to the caveolin family. In terms of assembly, homooligomer. Interacts with GLIPR2. Interacts with NOSTRIN. Interacts with SNAP25 and STX1A. Interacts (via the N-terminus) with DPP4; the interaction is direct. Interacts with CTNNB1, CDH1 and JUP. Interacts with PACSIN2; this interaction induces membrane tubulation. Interacts with SLC7A9. Interacts with BMX and BTK. Interacts with TGFBR1. Interacts with CAVIN3 (via leucine-zipper domain) in a cholesterol-sensitive manner. Interacts with CAVIN1. Interacts with EHD2 in a cholesterol-dependent manner. Forms a ternary complex with UBXN6 and VCP; mediates CAV1 targeting to lysosomes for degradation. Interacts with ABCG1; this interaction regulates ABCG1-mediated cholesterol efflux. Interacts with NEU3; this interaction enhances NEU3 sialidase activity within caveola. Interacts (via C-terminus) with SPRY1, SPRY2 (via C-terminus), SPRY3, and SPRY4. Interacts with IGFBP5; this interaction allows trafficking of IGFBP5 from the plasma membrane to the nucleus. In terms of processing, phosphorylated at Tyr-14 by ABL1 in response to oxidative stress. Post-translationally, ubiquitinated. Undergo monoubiquitination and multi- and/or polyubiquitination. Monoubiquitination of N-terminal lysines promotes integration in a ternary complex with UBXN6 and VCP which promotes oligomeric CAV1 targeting to lysosomes for degradation. Ubiquitinated by ZNRF1; leading to degradation and modulation of the TLR4-mediated immune response.

The protein resides in the golgi apparatus membrane. It is found in the cell membrane. The protein localises to the membrane. It localises to the caveola. Its subcellular location is the membrane raft. In terms of biological role, may act as a scaffolding protein within caveolar membranes. Forms a stable heterooligomeric complex with CAV2 that targets to lipid rafts and drives caveolae formation. Mediates the recruitment of CAVIN proteins (CAVIN1/2/3/4) to the caveolae. Interacts directly with G-protein alpha subunits and can functionally regulate their activity. Involved in the costimulatory signal essential for T-cell receptor (TCR)-mediated T-cell activation. Its binding to DPP4 induces T-cell proliferation and NF-kappa-B activation in a T-cell receptor/CD3-dependent manner. Recruits CTNNB1 to caveolar membranes and may regulate CTNNB1-mediated signaling through the Wnt pathway. Negatively regulates TGFB1-mediated activation of SMAD2/3 by mediating the internalization of TGFBR1 from membrane rafts leading to its subsequent degradation. Binds 20(S)-hydroxycholesterol (20(S)-OHC). This chain is Caveolin-1 (CAV1), found in Felis catus (Cat).